The chain runs to 334 residues: SH3 and cysteine-rich domain-containing protein 3 (334 aa).

Residues 1-26 (MAQYDQLEDKDSLDIHDNPPAPENVV) are disordered. Residues 7 to 17 (LEDKDSLDIHD) show a composition bias toward basic and acidic residues. A Phorbol-ester/DAG-type zinc finger spans residues 62–113 (PHKFKDHYCKKPKFCDVCARMIVLNNKFALRCKNCKTNIHHSCQSYVQFQRC). Residues 178-190 (EEEAQQPKEDEEG) show a composition bias toward acidic residues. The disordered stretch occupies residues 178-215 (EEEAQQPKEDEEGAEGKQDGDKKDKTATDDKNKKQQQT). Positions 191–210 (AEGKQDGDKKDKTATDDKNK) are enriched in basic and acidic residues. SH3 domains are found at residues 217-276 (SQSH…RVRA) and 277-334 (GERV…LHEL).

In terms of assembly, component of a calcium channel complex with CACNA1S. As to expression, expressed in muscles at the muscle triad.

The protein resides in the cytoplasm. The protein localises to the cell membrane. It is found in the sarcolemma. Its subcellular location is the T-tubule. Functionally, required for normal excitation-contraction coupling in skeletal muscle and for normal muscle contraction in response to membrane depolarization. Required for normal Ca(2+) release from the sarcplasmic reticulum, which ultimately leads to muscle contraction. Probably functions via its effects on muscle calcium channels. Increases CACNA1S channel activity, in addition to its role in enhancing the expression of CACNA1S at the cell membrane. Has a redundant role in promoting the expression of the calcium channel CACNA1S at the cell membrane. The sequence is that of SH3 and cysteine-rich domain-containing protein 3 from Danio rerio (Zebrafish).